Here is a 421-residue protein sequence, read N- to C-terminus: Histidine--tRNA ligase (421 aa).

Belongs to the class-II aminoacyl-tRNA synthetase family. In terms of assembly, homodimer.

Its subcellular location is the cytoplasm. The catalysed reaction is tRNA(His) + L-histidine + ATP = L-histidyl-tRNA(His) + AMP + diphosphate + H(+). In Coxiella burnetii (strain CbuG_Q212) (Coxiella burnetii (strain Q212)), this protein is Histidine--tRNA ligase.